Reading from the N-terminus, the 338-residue chain is RNA 3'-terminal phosphate cyclase (338 aa).

ATP is bound by residues Gln-103 and 283–287 (YLADQ). Residue His-308 is the Tele-AMP-histidine intermediate of the active site.

This sequence belongs to the RNA 3'-terminal cyclase family. Type 1 subfamily.

The protein localises to the cytoplasm. The enzyme catalyses a 3'-end 3'-phospho-ribonucleotide-RNA + ATP = a 3'-end 2',3'-cyclophospho-ribonucleotide-RNA + AMP + diphosphate. Functionally, catalyzes the conversion of 3'-phosphate to a 2',3'-cyclic phosphodiester at the end of RNA. The mechanism of action of the enzyme occurs in 3 steps: (A) adenylation of the enzyme by ATP; (B) transfer of adenylate to an RNA-N3'P to produce RNA-N3'PP5'A; (C) and attack of the adjacent 2'-hydroxyl on the 3'-phosphorus in the diester linkage to produce the cyclic end product. The biological role of this enzyme is unknown but it is likely to function in some aspects of cellular RNA processing. This Escherichia coli O9:H4 (strain HS) protein is RNA 3'-terminal phosphate cyclase.